The following is a 164-amino-acid chain: ATP synthase subunit b (164 aa).

The helical transmembrane segment at 10–32 (SAAMLMLFVLMVYFLNKFLYTPF) threads the bilayer.

This sequence belongs to the ATPase B chain family. As to quaternary structure, F-type ATPases have 2 components, F(1) - the catalytic core - and F(0) - the membrane proton channel. F(1) has five subunits: alpha(3), beta(3), gamma(1), delta(1), epsilon(1). F(0) has three main subunits: a(1), b(2) and c(10-14). The alpha and beta chains form an alternating ring which encloses part of the gamma chain. F(1) is attached to F(0) by a central stalk formed by the gamma and epsilon chains, while a peripheral stalk is formed by the delta and b chains.

The protein resides in the cell inner membrane. F(1)F(0) ATP synthase produces ATP from ADP in the presence of a proton or sodium gradient. F-type ATPases consist of two structural domains, F(1) containing the extramembraneous catalytic core and F(0) containing the membrane proton channel, linked together by a central stalk and a peripheral stalk. During catalysis, ATP synthesis in the catalytic domain of F(1) is coupled via a rotary mechanism of the central stalk subunits to proton translocation. Its function is as follows. Component of the F(0) channel, it forms part of the peripheral stalk, linking F(1) to F(0). This Thermotoga maritima (strain ATCC 43589 / DSM 3109 / JCM 10099 / NBRC 100826 / MSB8) protein is ATP synthase subunit b.